Here is a 587-residue protein sequence, read N- to C-terminus: Inorganic phosphate transporter PHO84 (587 aa).

The Extracellular portion of the chain corresponds to 1–67 (MSSVNKDTIH…FGWQQVKTIS (67 aa)). A Glycyl lysine isopeptide (Lys-Gly) (interchain with G-Cter in ubiquitin) cross-link involves residue K6. Residues 68–88 (IAGVGFLTDSYDIFAINLGIT) traverse the membrane as a helical segment. The Cytoplasmic portion of the chain corresponds to 89 to 108 (MMSYVYWHGSMPGPSQTLLK). The helical transmembrane segment at 109–129 (VSTSVGTVIGQFGFGTLADIV) threads the bilayer. The Extracellular portion of the chain corresponds to 130-133 (GRKR). Residues 134 to 154 (IYGMELIIMIVCTILQTTVAH) traverse the membrane as a helical segment. Topologically, residues 155-156 (SP) are cytoplasmic. Residues 157-177 (AINFVAVLTFYRIVMGIGIGG) form a helical membrane-spanning segment. The Extracellular portion of the chain corresponds to 178–201 (DYPLSSIITSEFATTKWRGAIMGA). Residues 202–222 (VFANQAWGQISGGIIALILVA) traverse the membrane as a helical segment. Over 223–250 (AYKGELEYANSGAECDARCQKACDQMWR) the chain is Cytoplasmic. Residues 251–271 (ILIGLGTVLGLACLYFRLTIP) form a helical membrane-spanning segment. Topologically, residues 272–345 (ESPRYQLDVN…RHFGQWKYGK (74 aa)) are extracellular. K298 is covalently cross-linked (Glycyl lysine isopeptide (Lys-Gly) (interchain with G-Cter in ubiquitin)). A Phosphothreonine modification is found at T302. Phosphoserine occurs at positions 303 and 316. T317 is modified (phosphothreonine). The residue at position 321 (S321) is a Phosphoserine. The helical transmembrane segment at 346 to 366 (ILLGTAGSWFTLDVAFYGLSL) threads the bilayer. The Cytoplasmic portion of the chain corresponds to 367–395 (NSAVILQTIGYAGSKNVYKKLYDTAVGNL). A helical membrane pass occupies residues 396–416 (ILICAGSLPGYWVSVFTVDII). The Extracellular segment spans residues 417–419 (GRK). A helical transmembrane segment spans residues 420-440 (PIQLAGFIILTALFCVIGFAY). The Cytoplasmic portion of the chain corresponds to 441-442 (HK). Residues 443–463 (LGDHGLLALYVICQFFQNFGP) traverse the membrane as a helical segment. At 464–485 (NTTTFIVPGECFPTRYRSTAHG) the chain is on the extracellular side. Residues 486 to 506 (ISAASGKVGAIIAQTALGTLI) traverse the membrane as a helical segment. Over 507-522 (DHNCARDGKPTNCWLP) the chain is Cytoplasmic. The chain crosses the membrane as a helical span at residues 523 to 543 (HVMEIFALFMLLGIFTTLLIP). The Extracellular segment spans residues 544-587 (ETKRKTLEEINELYHDEIDPATLNFRNKNNDIESSSPSQLQHEA). A disordered region spans residues 568 to 587 (FRNKNNDIESSSPSQLQHEA). Phosphoserine occurs at positions 577, 579, and 581.

It belongs to the major facilitator superfamily. Phosphate:H(+) symporter (TC 2.A.1.9) family. May function as a monomer. Post-translationally, phosphorylated; phosphorylation increases after phosphate addition to the growth medium. Ubiquitinated in a phosphate-dependent manner; ubiquitination may influence the trafficking of PHO84 to the cell membrane and serve as a signal for endocytosis and internalization.

It is found in the cell membrane. The protein localises to the vacuole. The enzyme catalyses phosphate(in) + H(+)(in) = phosphate(out) + H(+)(out). It catalyses the reaction Mn(2+)(in) = Mn(2+)(out). The catalysed reaction is Zn(2+)(in) = Zn(2+)(out). It carries out the reaction Cu(2+)(in) = Cu(2+)(out). The enzyme catalyses Co(2+)(in) = Co(2+)(out). With respect to regulation, transport activity is inhibited in the presence of the protonophore carbonylcyanide m-chlorophenylhydrazone. Transport activity is inhibited by glycerol-3-phosphate. Transport activity is inhibited by phosphonoacetic acid. Signaling activity is stimulated by glycerol-3-phosphate which acts as a nontransported PHO84 agonist that can trigger PKA signaling. Signaling activity is stimulated by arsenate. Proton-coupled high-affinity transporter for external inorganic phosphate. Acts as a transceptor, a membrane protein that in addition to its transporter activity also possesses receptor-like signaling activity; mediates activation of the protein kinase A (PKA) pathway targets during growth induction, triggered by phosphate addition to cells growth-arrested due to previous phosphate starvation. Is not an essential protein, since constitutive, low affinity phosphate transporters exist in yeast. Can function as a low affinity metal transporter that transports manganese, zinc, cobalt and copper. Plays a role in manganese homeostasis predominantly under manganese surplus conditions. The sequence is that of Inorganic phosphate transporter PHO84 (PHO84) from Saccharomyces cerevisiae (strain ATCC 204508 / S288c) (Baker's yeast).